The primary structure comprises 20 residues: Blooming-related protein 2 (20 aa).

The tract at residues valine 1–aspartate 20 is disordered.

Functionally, possible 'checkpoint' protein for cell division in the blooming process. In Prorocentrum triestinum (Red tide alga), this protein is Blooming-related protein 2.